A 265-amino-acid polypeptide reads, in one-letter code: Anamorsin homolog 1 (265 aa).

Residues 1 to 143 are N-terminal SAM-like domain; that stretch reads MAATAAAALA…KASWSMGSSF (143 aa). A linker region spans residues 144-175; sequence PLKKATKGLPKIQIDDDSELIDEDSLLTEDDL. Positions 186, 195, 198, and 200 each coordinate [2Fe-2S] cluster. Positions 186–200 are fe-S binding site A; sequence CEVGATRKACKNCTC. Cys-226, Cys-229, Cys-237, and Cys-240 together coordinate [4Fe-4S] cluster. 2 short sequence motifs (cx2C motif) span residues 226-229 and 237-240; these read CGNC and CGTC. Residues 226 to 240 are fe-S binding site B; sequence CGNCGLGDAFRCGTC.

The protein belongs to the anamorsin family. Monomer. Requires [2Fe-2S] cluster as cofactor. The cofactor is [4Fe-4S] cluster.

The protein resides in the cytoplasm. The protein localises to the mitochondrion intermembrane space. Its function is as follows. Component of the cytosolic iron-sulfur (Fe-S) protein assembly (CIA) machinery. Required for the maturation of extramitochondrial Fe-S proteins. Part of an electron transfer chain functioning in an early step of cytosolic Fe-S biogenesis, facilitating the de novo assembly of a [4Fe-4S] cluster on the cytosolic Fe-S scaffold complex. Electrons are transferred from NADPH via a FAD- and FMN-containing diflavin oxidoreductase. Together with the diflavin oxidoreductase, also required for the assembly of the diferric tyrosyl radical cofactor of ribonucleotide reductase (RNR), probably by providing electrons for reduction during radical cofactor maturation in the catalytic small subunit. The polypeptide is Anamorsin homolog 1 (Oryza sativa subsp. indica (Rice)).